The following is a 314-amino-acid chain: Glycine--tRNA ligase alpha subunit (314 aa).

This sequence belongs to the class-II aminoacyl-tRNA synthetase family. Tetramer of two alpha and two beta subunits.

It is found in the cytoplasm. The enzyme catalyses tRNA(Gly) + glycine + ATP = glycyl-tRNA(Gly) + AMP + diphosphate. This is Glycine--tRNA ligase alpha subunit from Mesorhizobium japonicum (strain LMG 29417 / CECT 9101 / MAFF 303099) (Mesorhizobium loti (strain MAFF 303099)).